Consider the following 471-residue polypeptide: ATP synthase subunit beta (471 aa).

156-163 (GGAGVGKT) contributes to the ATP binding site.

The protein belongs to the ATPase alpha/beta chains family. In terms of assembly, F-type ATPases have 2 components, CF(1) - the catalytic core - and CF(0) - the membrane proton channel. CF(1) has five subunits: alpha(3), beta(3), gamma(1), delta(1), epsilon(1). CF(0) has three main subunits: a(1), b(2) and c(9-12). The alpha and beta chains form an alternating ring which encloses part of the gamma chain. CF(1) is attached to CF(0) by a central stalk formed by the gamma and epsilon chains, while a peripheral stalk is formed by the delta and b chains.

The protein localises to the cell membrane. It carries out the reaction ATP + H2O + 4 H(+)(in) = ADP + phosphate + 5 H(+)(out). Functionally, produces ATP from ADP in the presence of a proton gradient across the membrane. The catalytic sites are hosted primarily by the beta subunits. The chain is ATP synthase subunit beta from Macrococcus caseolyticus (strain JCSC5402) (Macrococcoides caseolyticum).